The chain runs to 238 residues: MPGLPYPRILVKVSGEALMGSEPFGLHPPTVARIARELVAARELGCEVAVVVGGGNILRGARVAGEDLDRSTADHMGMLATVMNCLALEAAVEAAGQPARTMSAIPMPTVCEPYARQPAQRHLRRGRVVLLAGGTGNPYFTTDTGAVLRAAELDCDAVLKATNVDGVYTADPKTDPTATRYERITHDQALAYDLKVMDAAAFALAREASLPIIVFSIRDPGAIVAAAQGEGRVTVVSP.

12–15 (KVSG) lines the ATP pocket. Gly54 provides a ligand contact to UMP. 2 residues coordinate ATP: Gly55 and Arg59. Residues Asp74 and 135-142 (TGNPYFTT) each bind UMP. ATP contacts are provided by Thr162, Asn163, Tyr168, and Asp171.

The protein belongs to the UMP kinase family. Homohexamer.

It is found in the cytoplasm. The catalysed reaction is UMP + ATP = UDP + ADP. The protein operates within pyrimidine metabolism; CTP biosynthesis via de novo pathway; UDP from UMP (UMPK route): step 1/1. With respect to regulation, inhibited by UTP. In terms of biological role, catalyzes the reversible phosphorylation of UMP to UDP. In Azorhizobium caulinodans (strain ATCC 43989 / DSM 5975 / JCM 20966 / LMG 6465 / NBRC 14845 / NCIMB 13405 / ORS 571), this protein is Uridylate kinase.